Reading from the N-terminus, the 642-residue chain is MPIITLPDGSQRQFENAVSVMDVAADIGPGLAKACIAGRVNGELVDACELIEQDSQLAIITAKDDEGLEIIRHSCAHLLGHAIKQLWPQTKMAIGPVIENGFYYDVDLDHSLTQEDLETLEKRMLELAKTDYDVIKKRVTWAQARETFVARGEDYKVAILDENISQDAHPALYHHQEYIDMCRGPHVPNMRFCHHFKLQKIAGAYWRGNSDNKMLQRIYGTAWADKKQLKAYLERLEEAAKRDHRKIGKQLDLYHMQEEAPGMAFWHNDGWTIFRELETFVRCKLKEYDYQEVKGPFMMDRVLWEKTGHWENYKENMFTTSSENREYCIKPMNCPGHVQIFKQGLRSYRDLPLRMAEFGSCHRNEPSGALHGLMRVRGFTQDDAHIFCTEEQILSEVNNCIKLIYDVYSTFGFEKIVVKLSTRPEKRIGEDALWDIAETDLAKALTDNNIEFEYQPGEGAFYGPKIEFTLYDCLDRAWQCGTVQLDFSLPGRLGASYVAENNERKVPVMLHRAVLGSLERFIGILTEEYAGFFPTWLAPQQVVVMNITDGQADYVQKLVKELQDAGIRAKADLRNEKIGFKIREHTLRRVPYMLVCGDKEVESGKVAVRTRRGKDLGSIDVNDFKEKLLQEIRSRSLHQLEE.

The TGS domain occupies 1 to 61; that stretch reads MPIITLPDGS…EQDSQLAIIT (61 aa). Positions 243–534 are catalytic; it reads DHRKIGKQLD…LTEEYAGFFP (292 aa). Cysteine 334, histidine 385, and histidine 511 together coordinate Zn(2+).

Belongs to the class-II aminoacyl-tRNA synthetase family. In terms of assembly, homodimer. The cofactor is Zn(2+).

It is found in the cytoplasm. The catalysed reaction is tRNA(Thr) + L-threonine + ATP = L-threonyl-tRNA(Thr) + AMP + diphosphate + H(+). In terms of biological role, catalyzes the attachment of threonine to tRNA(Thr) in a two-step reaction: L-threonine is first activated by ATP to form Thr-AMP and then transferred to the acceptor end of tRNA(Thr). Also edits incorrectly charged L-seryl-tRNA(Thr). The protein is Threonine--tRNA ligase of Proteus mirabilis (strain HI4320).